Consider the following 493-residue polypeptide: Glutamyl-tRNA(Gln) amidotransferase subunit A (493 aa).

Active-site charge relay system residues include K78 and S158. S182 (acyl-ester intermediate) is an active-site residue.

The protein belongs to the amidase family. GatA subfamily. As to quaternary structure, heterotrimer of A, B and C subunits.

It carries out the reaction L-glutamyl-tRNA(Gln) + L-glutamine + ATP + H2O = L-glutaminyl-tRNA(Gln) + L-glutamate + ADP + phosphate + H(+). Functionally, allows the formation of correctly charged Gln-tRNA(Gln) through the transamidation of misacylated Glu-tRNA(Gln) in organisms which lack glutaminyl-tRNA synthetase. The reaction takes place in the presence of glutamine and ATP through an activated gamma-phospho-Glu-tRNA(Gln). The polypeptide is Glutamyl-tRNA(Gln) amidotransferase subunit A (Rickettsia bellii (strain RML369-C)).